We begin with the raw amino-acid sequence, 373 residues long: MISQREEREEKKQRVMGDKKLISSSSSSSVYDTRINHHLHHPPSSSDEISQFLRHIFDRSSPLPSYYSPATTTTTASLIGVHGSGDPHADNSRSLVSHHPPSDSVLMSKRVGDFSEVLIGGGSGSAAACFGFSGGGNNNNVQGNSSGTRVSSSSVGASGNETDEYDCESEEGGEAVVDEAPSSKSGPSSRSSSKRCRAAEVHNLSEKRRRSRINEKMKALQSLIPNSNKTDKASMLDEAIEYLKQLQLQVQMLTMRNGINLHPLCLPGTTLHPLQLSQIRPPEATNDPLLNHTNQFASTSNAPEMINTVASSYALEPSIRSHFGPFPLLTSPVEMSREGGLTHPRLNIGHSNANITGEQALFDGQPDLKDRIT.

Residues 1–21 (MISQREEREEKKQRVMGDKKL) show a composition bias toward basic and acidic residues. Disordered regions lie at residues 1 to 46 (MISQ…PSSS) and 141 to 210 (VQGN…KRRR). Residues 141–160 (VQGNSSGTRVSSSSVGASGN) are compositionally biased toward low complexity. Acidic residues predominate over residues 161-177 (ETDEYDCESEEGGEAVV). Residues 182–191 (SSKSGPSSRS) are compositionally biased toward low complexity. Positions 197–210 (RAAEVHNLSEKRRR) are enriched in basic and acidic residues. A bHLH domain is found at 197 to 246 (RAAEVHNLSEKRRRSRINEKMKALQSLIPNSNKTDKASMLDEAIEYLKQL).

Homodimer. Interacts with HEC1, HEC2 and HEC3. Binds to RGL2 and RGA. In terms of tissue distribution, expressed in lateral root caps, young leaves, stipules, maturing pith cells of the stem, differentiating vascular cells, shoot apical meristems and flowers.

The protein localises to the nucleus. Transcription factor that plays a role in floral organogenesis. Promotes the growth of carpel margins and of pollen tract tissues derived from them. The protein is Transcription factor SPATULA (SPT) of Arabidopsis thaliana (Mouse-ear cress).